We begin with the raw amino-acid sequence, 312 residues long: Pantothenate kinase (312 aa).

Residue 97 to 104 (GSVAVGKS) coordinates ATP.

This sequence belongs to the prokaryotic pantothenate kinase family.

The protein resides in the cytoplasm. It carries out the reaction (R)-pantothenate + ATP = (R)-4'-phosphopantothenate + ADP + H(+). It functions in the pathway cofactor biosynthesis; coenzyme A biosynthesis; CoA from (R)-pantothenate: step 1/5. The polypeptide is Pantothenate kinase (Mycobacterium sp. (strain JLS)).